We begin with the raw amino-acid sequence, 334 residues long: Mitochondrial glycine transporter (334 aa).

Solcar repeat units follow at residues 22–106, 135–219, and 237–321; these read SKTT…LRQG, LSNW…LKRR, and SSSS…LILR. Helical transmembrane passes span 28 to 53, 81 to 107, 141 to 166, 194 to 217, 241 to 267, and 296 to 314; these read FVAGLCSGLTSSILLQPADLLKTRVQ, GTLPSALRTGFGSALYFTSLNALRQGI, LATGAIARVAAGFVMMPVTVLKVRYE, GFGATAARDAPYAGLYVLFYEQLK, INFVSGGLAAGLATAITNPFDAVKTRL, and GLGLRITRKALSSALAWTV.

The protein belongs to the mitochondrial carrier (TC 2.A.29) family. SLC25A38 subfamily.

Its subcellular location is the mitochondrion inner membrane. The catalysed reaction is glycine(in) = glycine(out). Its function is as follows. Mitochondrial glycine transporter that imports glycine into the mitochondrial matrix. Plays an important role in providing glycine for the first enzymatic step in heme biosynthesis, the condensation of glycine with succinyl-CoA to produce 5-aminolevulinate (ALA) in the mitochondrial matrix. This is Mitochondrial glycine transporter from Aspergillus clavatus (strain ATCC 1007 / CBS 513.65 / DSM 816 / NCTC 3887 / NRRL 1 / QM 1276 / 107).